Consider the following 223-residue polypeptide: MAMKSLSFLAALSLLALTLPLTIASDPSQLQDFCVSANSSANGVFVNGKFCKDPKLVTADDFFFPGLQTARPITSPVGSTVTAVNVNNLLGLNTLGISLVRIDYAVDGQNPPHTHPRATEILVVELGTLLVGFVTSNPDNRLFTKVLNEGDVFVFPEGLIHFQANIGKAPAVAFAALSSQNPGVITIAPTVFGANPAINPNILAKAFQVDPRVVMDLQTKFKK.

Residues 1–24 (MAMKSLSFLAALSLLALTLPLTIA) form the signal peptide. A disulfide bridge links cysteine 34 with cysteine 51. Residue asparagine 38 is glycosylated (N-linked (GlcNAc...) asparagine). The Cupin type-1 domain occupies 65–215 (PGLQTARPIT…AFQVDPRVVM (151 aa)). Mn(2+)-binding residues include histidine 113, histidine 115, glutamate 120, and histidine 161.

This sequence belongs to the germin family. Oligomer (believed to be a pentamer but probably hexamer).

The protein resides in the secreted. Its subcellular location is the extracellular space. It is found in the apoplast. In terms of biological role, may play a role in plant defense. Probably has no oxalate oxidase activity even if the active site is conserved. This is Germin-like protein subfamily 1 member 10 from Arabidopsis thaliana (Mouse-ear cress).